Consider the following 69-residue polypeptide: Large ribosomal subunit protein bL28 (69 aa).

This sequence belongs to the bacterial ribosomal protein bL28 family.

This chain is Large ribosomal subunit protein bL28, found in Nitratidesulfovibrio vulgaris (strain ATCC 29579 / DSM 644 / CCUG 34227 / NCIMB 8303 / VKM B-1760 / Hildenborough) (Desulfovibrio vulgaris).